Here is a 217-residue protein sequence, read N- to C-terminus: Adenylate kinase (217 aa).

Residue 10-15 coordinates ATP; the sequence is GAGKGT. The NMP stretch occupies residues 30-59; it reads STGDMLRAAVKAGTPLGIEAKKVMDAGGLV. AMP is bound by residues Thr-31, Arg-36, 57-59, 85-88, and Gln-92; these read GLV and GFPR. The interval 122-159 is LID; it reads GRRAHLASGRTYHVKYNPPKVEGKDDVTGEDLVQRDDD. ATP contacts are provided by residues Arg-123 and 132–133; that span reads TY. AMP is bound by residues Arg-156 and Arg-167. Position 203 (Gly-203) interacts with ATP.

It belongs to the adenylate kinase family. In terms of assembly, monomer.

It localises to the cytoplasm. The catalysed reaction is AMP + ATP = 2 ADP. Its pathway is purine metabolism; AMP biosynthesis via salvage pathway; AMP from ADP: step 1/1. Functionally, catalyzes the reversible transfer of the terminal phosphate group between ATP and AMP. Plays an important role in cellular energy homeostasis and in adenine nucleotide metabolism. In Azoarcus sp. (strain BH72), this protein is Adenylate kinase.